We begin with the raw amino-acid sequence, 333 residues long: Casein kinase II subunit alpha-3 (333 aa).

One can recognise a Protein kinase domain in the interval 34–319 (YEVVRKVGRG…AREAMDHPYF (286 aa)). ATP contacts are provided by residues 40–48 (VGRGKYSEV) and lysine 63. Aspartate 151 serves as the catalytic Proton acceptor.

It belongs to the protein kinase superfamily. Ser/Thr protein kinase family. CK2 subfamily. In terms of assembly, heterotetramer of two catalytic alpha subunits and two regulatory beta subunits.

It is found in the nucleus. Its subcellular location is the nucleolus. The protein localises to the cytoplasm. It catalyses the reaction L-seryl-[protein] + ATP = O-phospho-L-seryl-[protein] + ADP + H(+). It carries out the reaction L-threonyl-[protein] + ATP = O-phospho-L-threonyl-[protein] + ADP + H(+). Functionally, casein kinases are operationally defined by their preferential utilization of acidic proteins such as caseins as substrates. The alpha chain contains the catalytic site. The tetrameric holoenzyme CK2 is composed of two alpha and two beta subunits. Acts as a circadian clock component that maintains the correct period length through phosphorylation of CCA1. This is Casein kinase II subunit alpha-3 from Arabidopsis thaliana (Mouse-ear cress).